A 97-amino-acid chain; its full sequence is Large ribosomal subunit protein bL28 (97 aa).

This sequence belongs to the bacterial ribosomal protein bL28 family.

The polypeptide is Large ribosomal subunit protein bL28 (Brucella abortus (strain S19)).